The sequence spans 627 residues: MAFVSIAPLASRCCVHKSFVSSREVKPLCRTIPTLGRCRRGKTVTPSISMCWTATVLDDGVQRRIANHHSNLWDDSFIQSLSTPYGETSYLERADKLIGEVKEIINSISVEDGELITPLNDLIQRLSIVDIIERLGIDRHFKNEIKSALDYVYSYWNEKGIGCGRECVITHLNSTALGLRTLRLHGYPVSSDVLEQFKDQNGQFACSAIQTEGEIKSVLNLFRASLIAFPGEKVMEEAEIFSTIYLKEALLTIPVCSLSREIAYVLEHGWHTNLPRLEARNYIDVFGQDPIYGTPNIKMTQKLLEIAKLEFNIFHSLQQKELKHLSRWWKDSVFSQLAFPRHRHVEYYTLASCIDIDPQHSSFRLGFAKISHLGTVLDDIYDTFGTMDELELFTAAVKRWHPSATKWLPEYMKGVYMMLYETVNEMAREADKSQGRDTLNYARQAWEAYIDSYMKEAKWISSGFLPTFEEYLDNGKVSFGYRIGTLQPILTLGTPFPHHILQEIDFPSSLNDLACSILRLKGDILTYQAERSRGEKSSCISCYMKDNPGSTEEDAVAYINGMVNKSLKELNWEFLRPDSNAPITSKKHAFDILRAFYHLYKHRDGFSVARNEIRNLVKTTVIEPVPL.

The transit peptide at 1–21 (MAFVSIAPLASRCCVHKSFVS) directs the protein to the chloroplast. Residues Asp378, Asp382, and Glu530 each coordinate Mg(2+). Positions 378–382 (DDIYD) match the DDXXD motif motif.

It belongs to the terpene synthase family. Tpsd subfamily. Mg(2+) serves as cofactor. It depends on Mn(2+) as a cofactor.

The protein localises to the plastid. The protein resides in the chloroplast. It catalyses the reaction (2E)-geranyl diphosphate + H2O = (R)-linalool + diphosphate. The protein operates within terpene metabolism; oleoresin biosynthesis. Its function is as follows. Terpene synthase (TPS) involved in the biosynthesis of monoterpene natural products included in conifer oleoresin secretions and volatile emissions; these compounds contribute to biotic and abiotic stress defense against herbivores and pathogens. Catalyzes the conversion of (2E)-geranyl diphosphate (GPP) to (R)-linalool. This Picea glauca (White spruce) protein is (R)-linalool synthase, chloroplastic.